Consider the following 264-residue polypeptide: 5'-nucleotidase SurE (264 aa).

A divalent metal cation-binding residues include Asp-10, Asp-11, Ser-43, and Asn-99.

Belongs to the SurE nucleotidase family. Requires a divalent metal cation as cofactor.

It localises to the cytoplasm. The catalysed reaction is a ribonucleoside 5'-phosphate + H2O = a ribonucleoside + phosphate. In terms of biological role, nucleotidase that shows phosphatase activity on nucleoside 5'-monophosphates. This is 5'-nucleotidase SurE from Methanococcus maripaludis (strain C7 / ATCC BAA-1331).